A 234-amino-acid chain; its full sequence is MKIIRVQDQIEGGKIAFTLLKDSLAKGAKTLGLATGSSPISFYQEMVKSPLDFSDLTSINLDEYVGLSVESDQSYDYFMRQNLFNAKPFKKNYLPNGLATNIEAEAKRYDQIIAEHPIDFQVLGIGRNGHIGFNEPGTSFKEETHVVDLQESTIEANSRFFTSIEDVPKQAISMGIASIMKSKMIVLLAFGQEKADAIKGMVFGPITEDLPASILQKHDHVIVIVDEAAASQLD.

Residue D62 is the Proton acceptor; for enolization step of the active site. Catalysis depends on N128, which acts as the For ring-opening step. The Proton acceptor; for ring-opening step role is filled by H130. The active-site For ring-opening step is E135.

This sequence belongs to the glucosamine/galactosamine-6-phosphate isomerase family. NagB subfamily.

The catalysed reaction is alpha-D-glucosamine 6-phosphate + H2O = beta-D-fructose 6-phosphate + NH4(+). It functions in the pathway amino-sugar metabolism; N-acetylneuraminate degradation; D-fructose 6-phosphate from N-acetylneuraminate: step 5/5. Its function is as follows. Catalyzes the reversible isomerization-deamination of glucosamine 6-phosphate (GlcN6P) to form fructose 6-phosphate (Fru6P) and ammonium ion. This Streptococcus pyogenes serotype M18 (strain MGAS8232) protein is Glucosamine-6-phosphate deaminase.